We begin with the raw amino-acid sequence, 424 residues long: Cuticlin-1 (424 aa).

A signal peptide spans 1-18; that stretch reads MTWKPIICLAALVLSASA. Over 19–392 the chain is Extracellular; the sequence is IPVDNNVEGE…ATSTGICLTP (374 aa). One can recognise a ZP domain in the interval 32–277; that stretch reads ECGPNSITVN…PTCSEPQGFG (246 aa). Cysteines 197 and 252 form a disulfide. 4 consecutive repeat copies span residues 302–305, 307–311, 312–315, and 320–323. The interval 302–323 is 4 X 4 AA repeats of A-A-P-[AVI]; sequence AAPVAAAAPVAAPVAAAAAAPA. A helical membrane pass occupies residues 393–413; the sequence is IGFASFLGIGTIVATALSATI. Topologically, residues 414–424 are cytoplasmic; that stretch reads FYVARPTSHKH.

The protein localises to the cell membrane. The protein resides in the secreted. Functionally, component of the cuticles, which contributes to the formation of extracellular envelopes protecting the organism from the environment. Plays a role in alae formation in dauer larvae. The chain is Cuticlin-1 from Caenorhabditis elegans.